The chain runs to 208 residues: Large ribosomal subunit protein uL3 (208 aa).

N5-methylglutamine is present on Q150.

This sequence belongs to the universal ribosomal protein uL3 family. As to quaternary structure, part of the 50S ribosomal subunit. Forms a cluster with proteins L14 and L19. Methylated by PrmB.

In terms of biological role, one of the primary rRNA binding proteins, it binds directly near the 3'-end of the 23S rRNA, where it nucleates assembly of the 50S subunit. The sequence is that of Large ribosomal subunit protein uL3 from Buchnera aphidicola subsp. Cinara cedri (strain Cc).